Reading from the N-terminus, the 864-residue chain is DNA mismatch repair protein MutS (864 aa).

607-614 contacts ATP; that stretch reads GPNMGGKS.

The protein belongs to the DNA mismatch repair MutS family.

Its function is as follows. This protein is involved in the repair of mismatches in DNA. It is possible that it carries out the mismatch recognition step. This protein has a weak ATPase activity. This Neisseria gonorrhoeae (strain NCCP11945) protein is DNA mismatch repair protein MutS.